Consider the following 229-residue polypeptide: Heptaprenylglyceryl phosphate synthase (229 aa).

Residue Lys-12 coordinates sn-glycerol 1-phosphate. Residues Asp-14 and Ser-40 each contribute to the Mg(2+) site. Sn-glycerol 1-phosphate is bound by residues Tyr-159–Gly-164, Gly-189, and Gly-209–Asn-210.

Belongs to the GGGP/HepGP synthase family. Group I subfamily. Homodimer. The cofactor is Mg(2+).

The catalysed reaction is sn-glycerol 1-phosphate + all-trans-heptaprenyl diphosphate = 3-heptaprenyl-sn-glycero-1-phosphate + diphosphate. It functions in the pathway membrane lipid metabolism; glycerophospholipid metabolism. Its function is as follows. Prenyltransferase that catalyzes in vivo the transfer of the heptaprenyl moiety of heptaprenyl pyrophosphate (HepPP; 35 carbon atoms) to the C3 hydroxyl of sn-glycerol-1-phosphate (G1P), producing heptaprenylglyceryl phosphate (HepGP). This reaction is an ether-bond-formation step in the biosynthesis of archaea-type G1P-based membrane lipids found in Bacillales. The polypeptide is Heptaprenylglyceryl phosphate synthase (Bacillus cereus (strain G9842)).